A 25-amino-acid polypeptide reads, in one-letter code: Arginine attenuator peptide (25 aa).

The protein belongs to the arginine attenuator peptide family.

Its function is as follows. Arginine attenuator peptide (AAP) that has a regulatory role in the production of arginine-specific carbamoyl phosphate synthetase. Encoded by an upstream open reading frame (uORF) within the 5'-leader region of arginine-specific carbamoyl phosphate synthetase small chain (CPA1) mRNA, it attenuates the translation of the downstream CPA1 ORF. In the presence of high concentrations of arginine, ribosomes translating the uORF encoding AAP stall at the termination codon, resulting in reduced translation from the downstream CPA1 initiation codon. The polypeptide is Arginine attenuator peptide (Saccharomyces cerevisiae (strain ATCC 204508 / S288c) (Baker's yeast)).